The chain runs to 189 residues: Elongation factor P 2 (189 aa).

This sequence belongs to the elongation factor P family.

It is found in the cytoplasm. Its pathway is protein biosynthesis; polypeptide chain elongation. In terms of biological role, involved in peptide bond synthesis. Stimulates efficient translation and peptide-bond synthesis on native or reconstituted 70S ribosomes in vitro. Probably functions indirectly by altering the affinity of the ribosome for aminoacyl-tRNA, thus increasing their reactivity as acceptors for peptidyl transferase. In Mesorhizobium japonicum (strain LMG 29417 / CECT 9101 / MAFF 303099) (Mesorhizobium loti (strain MAFF 303099)), this protein is Elongation factor P 2.